Reading from the N-terminus, the 189-residue chain is Orcokinin peptides (189 aa).

An N-terminal signal peptide occupies residues 1 to 21 (MRGAGGALAVAVAALLVCCSA). 2 consecutive propeptides follow at residues 22–124 (DPHQ…TFVK) and 145–174 (FYHL…PIGS).

Belongs to the orcokinin family. Orcokinin-like peptide: Expressed in corpora cardiaca (CC), corpora allata (CA), antennal lobe (AL) and gnathal ganglion (GNG) (at protein level). Expression in CC, CA and GNG detected in some animals, in AL in few animals (at protein level). Orcokinin-like peptide precursor-related peptide: Expressed in corpora cardiaca (CC), corpora allata (CA), antennal lobe (AL) and gnathal ganglion (GNG) (at protein level). Expression in GNG detected in most animals, expression in CC, CA and AL detected in some animals (at protein level).

Its subcellular location is the secreted. Myotropic peptides. In Agrotis ipsilon (Black cutworm moth), this protein is Orcokinin peptides.